We begin with the raw amino-acid sequence, 872 residues long: Alanine--tRNA ligase (872 aa).

Positions 567, 571, 669, and 673 each coordinate Zn(2+).

It belongs to the class-II aminoacyl-tRNA synthetase family. Zn(2+) is required as a cofactor.

The protein localises to the cytoplasm. It catalyses the reaction tRNA(Ala) + L-alanine + ATP = L-alanyl-tRNA(Ala) + AMP + diphosphate. Catalyzes the attachment of alanine to tRNA(Ala) in a two-step reaction: alanine is first activated by ATP to form Ala-AMP and then transferred to the acceptor end of tRNA(Ala). Also edits incorrectly charged Ser-tRNA(Ala) and Gly-tRNA(Ala) via its editing domain. The chain is Alanine--tRNA ligase from Streptococcus pyogenes serotype M28 (strain MGAS6180).